Reading from the N-terminus, the 382-residue chain is Dual-specificity RNA methyltransferase RlmN (382 aa).

Glu94 (proton acceptor) is an active-site residue. The 237-residue stretch at 100–336 folds into the Radical SAM core domain; it reads EANRGTLCVS…NTITRKTRGD (237 aa). A disulfide bond links Cys107 and Cys342. 3 residues coordinate [4Fe-4S] cluster: Cys114, Cys118, and Cys121. S-adenosyl-L-methionine contacts are provided by residues 168–169, Ser200, 222–224, and Asn299; these read GE and SLH. Cys342 serves as the catalytic S-methylcysteine intermediate.

Belongs to the radical SAM superfamily. RlmN family. [4Fe-4S] cluster is required as a cofactor.

The protein localises to the cytoplasm. It carries out the reaction adenosine(2503) in 23S rRNA + 2 reduced [2Fe-2S]-[ferredoxin] + 2 S-adenosyl-L-methionine = 2-methyladenosine(2503) in 23S rRNA + 5'-deoxyadenosine + L-methionine + 2 oxidized [2Fe-2S]-[ferredoxin] + S-adenosyl-L-homocysteine. The catalysed reaction is adenosine(37) in tRNA + 2 reduced [2Fe-2S]-[ferredoxin] + 2 S-adenosyl-L-methionine = 2-methyladenosine(37) in tRNA + 5'-deoxyadenosine + L-methionine + 2 oxidized [2Fe-2S]-[ferredoxin] + S-adenosyl-L-homocysteine. In terms of biological role, specifically methylates position 2 of adenine 2503 in 23S rRNA and position 2 of adenine 37 in tRNAs. m2A2503 modification seems to play a crucial role in the proofreading step occurring at the peptidyl transferase center and thus would serve to optimize ribosomal fidelity. The polypeptide is Dual-specificity RNA methyltransferase RlmN (Legionella pneumophila subsp. pneumophila (strain Philadelphia 1 / ATCC 33152 / DSM 7513)).